Consider the following 98-residue polypeptide: Co-chaperonin GroES (98 aa).

This sequence belongs to the GroES chaperonin family. Heptamer of 7 subunits arranged in a ring. Interacts with the chaperonin GroEL.

It is found in the cytoplasm. Functionally, together with the chaperonin GroEL, plays an essential role in assisting protein folding. The GroEL-GroES system forms a nano-cage that allows encapsulation of the non-native substrate proteins and provides a physical environment optimized to promote and accelerate protein folding. GroES binds to the apical surface of the GroEL ring, thereby capping the opening of the GroEL channel. In Leifsonia xyli subsp. xyli (strain CTCB07), this protein is Co-chaperonin GroES.